Consider the following 432-residue polypeptide: tRNA(Ile)-lysidine synthase (432 aa).

Residue 20–25 (SGGLDS) coordinates ATP.

This sequence belongs to the tRNA(Ile)-lysidine synthase family.

It is found in the cytoplasm. It carries out the reaction cytidine(34) in tRNA(Ile2) + L-lysine + ATP = lysidine(34) in tRNA(Ile2) + AMP + diphosphate + H(+). Ligates lysine onto the cytidine present at position 34 of the AUA codon-specific tRNA(Ile) that contains the anticodon CAU, in an ATP-dependent manner. Cytidine is converted to lysidine, thus changing the amino acid specificity of the tRNA from methionine to isoleucine. The protein is tRNA(Ile)-lysidine synthase of Shigella flexneri.